The sequence spans 610 residues: Zinc metalloproteinase-disintegrin-like halysase (610 aa).

A signal peptide spans 1–20 (MIQVLLVTICLAVFPYQGSS). The propeptide occupies 21–182 (IILESGNVND…WESYEPIKKA (162 aa)). A Peptidase M12B domain is found at 199–395 (KYVKLVMVAD…DMPQCILKKP (197 aa)). N-linked (GlcNAc...) asparagine glycosylation occurs at asparagine 218. 3 disulfide bridges follow: cysteine 310–cysteine 390, cysteine 350–cysteine 374, and cysteine 352–cysteine 357. Zn(2+) is bound at residue histidine 335. Residue glutamate 336 is part of the active site. Residues histidine 339 and histidine 345 each contribute to the Zn(2+) site. A Disintegrin domain is found at 403-488 (PPVCGNYFVE…AECTDRFQRN (86 aa)). Ca(2+) is bound by residues valine 405, asparagine 408, phenylalanine 410, glutamate 412, glutamate 415, and aspartate 418. 14 cysteine pairs are disulfide-bonded: cysteine 406–cysteine 435, cysteine 417–cysteine 430, cysteine 419–cysteine 425, cysteine 429–cysteine 452, cysteine 443–cysteine 449, cysteine 448–cysteine 474, cysteine 461–cysteine 481, cysteine 468–cysteine 499, cysteine 492–cysteine 504, cysteine 511–cysteine 561, cysteine 526–cysteine 572, cysteine 539–cysteine 549, cysteine 556–cysteine 598, and cysteine 592–cysteine 603. The short motif at 467 to 469 (ECD) is the D/ECD-tripeptide element.

Belongs to the venom metalloproteinase (M12B) family. P-III subfamily. P-IIIa sub-subfamily. As to quaternary structure, monomer. The cofactor is Zn(2+). Expressed by the venom gland.

The protein resides in the secreted. With respect to regulation, inhibited by EDTA and EGTA. Not inhibited by PMSF, antipain, pepstatin, and iodoacetamide. Functionally, strongly inhibits the collagen-induced human platelet aggregation (inhibition of alpha-2/beta-1 (ITGA2/ITGB1) integrin). Hydrolyzes the Aalpha-chain of fibrinogen, without cleavage of Bbeta- and gamma-chains. Degrades type IV collagen (but not types I, II and V), fibronectin and vitronectin and also integrins alpha-1/beta-1 (ITGA1/ITGB1) and alpha-5/beta/1 (ITGA5/ITGB1) (but not alpha-V/beta-3 (ITGAV/ITGB3) and alpha-V/beta-5 (ITGAV/ITGB5) integrins). Both metalloproteinase (peptidase M12B) and disintegrin-like domains (recombinantly expressed and named halydin) play characteristic roles to inhibit human platelet aggregation. Induces apoptosis and strongly inhibits proliferation of endothelial cells as well as adhesion of the cells to extracellular matrix proteins. The apoptosis is closely associated with activation of caspase-3 and decreased level of Bcl-X(L)/Bax. Apohalysase, which lacks metalloprotease activity, is also able to induce the apoptosis. Cleaves insulin B chain at '34-His-|-Leu-35', '37-Glu-|-Ala-38', '38-Ala-|-Leu-39', '39-Leu-|-Tyr-40', '40-Tyr-|-Leu-41', '47-Gly-|-Phe-48' and '48-Phe-|-Phe-49' bonds. In Gloydius halys (Chinese water mocassin), this protein is Zinc metalloproteinase-disintegrin-like halysase.